The primary structure comprises 184 residues: Large ribosomal subunit protein uL6 (184 aa).

This sequence belongs to the universal ribosomal protein uL6 family. In terms of assembly, part of the 50S ribosomal subunit.

This protein binds to the 23S rRNA, and is important in its secondary structure. It is located near the subunit interface in the base of the L7/L12 stalk, and near the tRNA binding site of the peptidyltransferase center. The chain is Large ribosomal subunit protein uL6 from Thermotoga maritima (strain ATCC 43589 / DSM 3109 / JCM 10099 / NBRC 100826 / MSB8).